Here is a 466-residue protein sequence, read N- to C-terminus: cAMP-dependent protein kinase regulatory subunit (466 aa).

A dimerization and phosphorylation region spans residues 25–231 (QFAANYFTKR…RLEKAVGKNF (207 aa)). Residues 71-80 (ASLSHGSSKA) show a composition bias toward low complexity. Disordered regions lie at residues 71–90 (ASLS…ISSS), 109–139 (STHI…PGIF), 154–179 (NSSV…VVNP), and 193–218 (SVSG…KSPE). Residues 81 to 90 (NASQSGISSS) are compositionally biased toward polar residues. Residues 109-118 (STHIVDHLDS) show a composition bias toward basic and acidic residues. Position 193 is a phosphoserine (S193). Basic and acidic residues predominate over residues 200-218 (QPDHLDDWKPENFQEKSPE). Residues 232–347 (LFNK…LLKN), E297, R306, 350–466 (ILKS…RSKH), E416, and R425 each bind 3',5'-cyclic AMP.

This sequence belongs to the cAMP-dependent kinase regulatory chain family. In terms of assembly, tetramer, composed of 2 regulatory (R) and 2 catalytic (C) subunits. In the presence of cAMP it dissociates into 2 active monomeric C subunits and an R dimer.

In Kluyveromyces lactis (strain ATCC 8585 / CBS 2359 / DSM 70799 / NBRC 1267 / NRRL Y-1140 / WM37) (Yeast), this protein is cAMP-dependent protein kinase regulatory subunit (PKAR).